Reading from the N-terminus, the 644-residue chain is Exoribonuclease 2 (644 aa).

The region spanning 189–516 is the RNB domain; it reads REDLTSLDFV…NHRLLKAVIK (328 aa). One can recognise an S1 motif domain in the interval 561–643; the sequence is GTRFAAEIVD…ETRSIIARPV (83 aa).

The protein belongs to the RNR ribonuclease family. RNase II subfamily.

It localises to the cytoplasm. It carries out the reaction Exonucleolytic cleavage in the 3'- to 5'-direction to yield nucleoside 5'-phosphates.. Functionally, involved in mRNA degradation. Hydrolyzes single-stranded polyribonucleotides processively in the 3' to 5' direction. The protein is Exoribonuclease 2 of Shigella flexneri serotype 5b (strain 8401).